The primary structure comprises 549 residues: DNA ligase 1 (549 aa).

Glu212 provides a ligand contact to ATP. Residue Lys214 is the N6-AMP-lysine intermediate of the active site. 6 residues coordinate ATP: Arg219, Arg234, Glu264, Phe310, Arg387, and Lys393.

Belongs to the ATP-dependent DNA ligase family. Mg(2+) serves as cofactor.

The catalysed reaction is ATP + (deoxyribonucleotide)n-3'-hydroxyl + 5'-phospho-(deoxyribonucleotide)m = (deoxyribonucleotide)n+m + AMP + diphosphate.. Functionally, DNA ligase that seals nicks in double-stranded DNA during DNA replication, DNA recombination and DNA repair. The sequence is that of DNA ligase 1 from Methanosarcina barkeri (strain Fusaro / DSM 804).